The chain runs to 785 residues: Cadherin-7 (785 aa).

The first 27 residues, 1–27 (MKLGKVEFCHLLQIIALFLCLSGMNQA), serve as a signal peptide directing secretion. A propeptide spanning residues 28 to 47 (EPSRSRSKPYFQSGRTRTKR) is cleaved from the precursor. Residues 48–607 (SWVWNQFFVL…AYILPAGLST (560 aa)) are Extracellular-facing. Cadherin domains are found at residues 49–153 (WVWN…EPKF), 154–262 (LDGP…PPRF), 263–377 (PRRS…PPVF), 378–482 (TSRL…APEF), and 482–599 (FAME…AEAY). N-linked (GlcNAc...) asparagine glycans are attached at residues asparagine 449 and asparagine 530. The chain crosses the membrane as a helical span at residues 608 to 628 (GALIAILACVLTLLVLVLLIV). Residues 629 to 785 (TMRRRKKEPL…YGSGPDCLYS (157 aa)) are Cytoplasmic-facing.

The protein localises to the cell membrane. Functionally, cadherins are calcium-dependent cell adhesion proteins. They preferentially interact with themselves in a homophilic manner in connecting cells; cadherins may thus contribute to the sorting of heterogeneous cell types. This chain is Cadherin-7 (CDH7), found in Gallus gallus (Chicken).